The sequence spans 1129 residues: Phospholipid-transporting ATPase 11C (1129 aa).

Residues 1 to 83 (MFRRTLNRLC…IIFLVQVTVD (83 aa)) are Cytoplasmic-facing. The helical transmembrane segment at 84 to 104 (TPTSPVTSGLPLFFVITVTAI) threads the bilayer. The Extracellular portion of the chain corresponds to 105–287 (KQGYEDWLRH…SQKCSAVEKS (183 aa)). A helical transmembrane segment spans residues 288-308 (INAFLIVYLFILLTKAAVCTT). Residues 309-343 (LKYVWQSSPYNDEPWYNQKTQKERETFQVLKMFTD) are Cytoplasmic-facing. Residues 344–364 (FLSFMVLFNFIIPVSMYVTVE) traverse the membrane as a helical segment. The Extracellular segment spans residues 365–876 (MQKFLGSFFI…YVRIAHLVQY (512 aa)). Catalysis depends on aspartate 409, which acts as the 4-aspartylphosphate intermediate. Residues aspartate 409, lysine 410, and threonine 411 each coordinate ATP. Aspartate 409 lines the Mg(2+) pocket. Residue threonine 411 coordinates Mg(2+). A Phosphoserine modification is found at serine 442. Glutamate 498, phenylalanine 540, lysine 563, and arginine 594 together coordinate ATP. Positions 607–643 (DFERINAQLVEAKMALQDREEKLEKVFDEIETNMNLI) form a coiled coil. ATP contacts are provided by threonine 674, glycine 675, and aspartate 676. Residues 695 to 726 (TELLELTTKTIEESERKEDRLHELLIEYRKKL) are a coiled coil. ATP-binding residues include arginine 789 and lysine 795. Position 816 (aspartate 816) interacts with Mg(2+). Positions 819 and 820 each coordinate ATP. Aspartate 820 is a Mg(2+) binding site. A helical transmembrane segment spans residues 877 to 897 (FFYKNLCFILPQFLYQFFCGF). Residues 898 to 905 (SQQPLYDA) lie on the Cytoplasmic side of the membrane. A helical transmembrane segment spans residues 906-926 (AYLTMYNICFTSLPILAYSLL). Topologically, residues 927–952 (EQHINIDTLTADPRLYMKITGNAMLQ) are extracellular. A helical membrane pass occupies residues 953 to 973 (LGPFLHWTFLAAFEGTVFFFG). Residues 974 to 988 (TYFLFQTSSLEDNGK) are Cytoplasmic-facing. A helical membrane pass occupies residues 989–1009 (IYGNWTFGTIVFTVLVFTVTL). Topologically, residues 1010 to 1023 (KLALDTRFWTWINH) are extracellular. Residues 1024 to 1044 (FVIWGSLAFYVFFSFFWGGII) traverse the membrane as a helical segment. The Cytoplasmic segment spans residues 1045–1066 (WPFLKQQRMYFVFAQMLCSVST). A helical membrane pass occupies residues 1067–1087 (WLAIILLIFISLFPEILLIVV). Topologically, residues 1088-1129 (KNVRRRSARRNLSCRRASDSLSARPSVRPLLLRTFSDESNIL) are extracellular. Serine 1105, serine 1113, and serine 1123 each carry phosphoserine. The short motif at 1113-1118 (SVRPLL) is the Di-leucine motif element.

This sequence belongs to the cation transport ATPase (P-type) (TC 3.A.3) family. Type IV subfamily. In terms of assembly, component of a P4-ATPase flippase complex which consists of a catalytic alpha subunit ATP11C and an accessory beta subunit TMEM30A. The cofactor is Mg(2+). Proteolytically cleaved by CASP3, CASP6 and CASP7. In terms of processing, phosphorylated at Ser-1113 likely by PRKCA; this creates a functional di-leucine motif that is sufficient for endocytosis. Widely expressed. Expressed in retina, brain, liver and testes (at protein level). Expressed in lung, bone marrow, lymph nodes, prostate, ovary and uterus. Expressed in fetus.

Its subcellular location is the cell membrane. It localises to the endoplasmic reticulum membrane. It is found in the early endosome membrane. The protein localises to the recycling endosome membrane. It catalyses the reaction ATP + H2O + phospholipidSide 1 = ADP + phosphate + phospholipidSide 2.. The enzyme catalyses a 1,2-diacyl-sn-glycero-3-phospho-L-serine(out) + ATP + H2O = a 1,2-diacyl-sn-glycero-3-phospho-L-serine(in) + ADP + phosphate + H(+). The catalysed reaction is a 1,2-diacyl-sn-glycero-3-phosphoethanolamine(out) + ATP + H2O = a 1,2-diacyl-sn-glycero-3-phosphoethanolamine(in) + ADP + phosphate + H(+). In terms of biological role, catalytic component of a P4-ATPase flippase complex which catalyzes the hydrolysis of ATP coupled to the transport of aminophospholipids, phosphatidylserines (PS) and phosphatidylethanolamines (PE), from the outer to the inner leaflet of the plasma membrane. Major PS-flippase in immune cell subsets. In erythrocyte plasma membrane, it is required to maintain PS in the inner leaflet preventing its exposure on the surface. This asymmetric distribution is critical for the survival of erythrocytes in circulation since externalized PS is a phagocytic signal for erythrocyte clearance by splenic macrophages. Required for B cell differentiation past the pro-B cell stage. Seems to mediate PS flipping in pro-B cells. May be involved in the transport of cholestatic bile acids. The sequence is that of Phospholipid-transporting ATPase 11C from Mus musculus (Mouse).